Here is a 693-residue protein sequence, read N- to C-terminus: Elongation factor G (693 aa).

The region spanning Asn-8–Thr-283 is the tr-type G domain. GTP-binding positions include Ala-17–Thr-24, Asp-81–His-85, and Asn-135–Asp-138.

It belongs to the TRAFAC class translation factor GTPase superfamily. Classic translation factor GTPase family. EF-G/EF-2 subfamily.

It localises to the cytoplasm. In terms of biological role, catalyzes the GTP-dependent ribosomal translocation step during translation elongation. During this step, the ribosome changes from the pre-translocational (PRE) to the post-translocational (POST) state as the newly formed A-site-bound peptidyl-tRNA and P-site-bound deacylated tRNA move to the P and E sites, respectively. Catalyzes the coordinated movement of the two tRNA molecules, the mRNA and conformational changes in the ribosome. This Wolinella succinogenes (strain ATCC 29543 / DSM 1740 / CCUG 13145 / JCM 31913 / LMG 7466 / NCTC 11488 / FDC 602W) (Vibrio succinogenes) protein is Elongation factor G.